The sequence spans 378 residues: Bifunctional enzyme IspD/IspF (378 aa).

The 2-C-methyl-D-erythritol 4-phosphate cytidylyltransferase stretch occupies residues 1 to 222 (MTETVAIIVA…RLLSPTGAPR (222 aa)). The tract at residues 222–378 (RIGKGYDVHE…EAVALLMPKG (157 aa)) is 2-C-methyl-D-erythritol 2,4-cyclodiphosphate synthase. Residues Asp228 and His230 each coordinate a divalent metal cation. Residues 228 to 230 (DVH) and 254 to 255 (HS) each bind 4-CDP-2-C-methyl-D-erythritol 2-phosphate. Residue His262 coordinates a divalent metal cation. Residues 276-278 (DIG), 352-355 (TTTE), Phe359, and Arg362 each bind 4-CDP-2-C-methyl-D-erythritol 2-phosphate.

This sequence in the N-terminal section; belongs to the IspD/TarI cytidylyltransferase family. IspD subfamily. The protein in the C-terminal section; belongs to the IspF family. A divalent metal cation is required as a cofactor.

The catalysed reaction is 2-C-methyl-D-erythritol 4-phosphate + CTP + H(+) = 4-CDP-2-C-methyl-D-erythritol + diphosphate. It catalyses the reaction 4-CDP-2-C-methyl-D-erythritol 2-phosphate = 2-C-methyl-D-erythritol 2,4-cyclic diphosphate + CMP. It participates in isoprenoid biosynthesis; isopentenyl diphosphate biosynthesis via DXP pathway; isopentenyl diphosphate from 1-deoxy-D-xylulose 5-phosphate: step 2/6. Its pathway is isoprenoid biosynthesis; isopentenyl diphosphate biosynthesis via DXP pathway; isopentenyl diphosphate from 1-deoxy-D-xylulose 5-phosphate: step 4/6. Bifunctional enzyme that catalyzes the formation of 4-diphosphocytidyl-2-C-methyl-D-erythritol from CTP and 2-C-methyl-D-erythritol 4-phosphate (MEP) (IspD), and catalyzes the conversion of 4-diphosphocytidyl-2-C-methyl-D-erythritol 2-phosphate (CDP-ME2P) to 2-C-methyl-D-erythritol 2,4-cyclodiphosphate (ME-CPP) with a corresponding release of cytidine 5-monophosphate (CMP) (IspF). The polypeptide is Bifunctional enzyme IspD/IspF (Hyphomonas neptunium (strain ATCC 15444)).